Consider the following 333-residue polypeptide: Adenosine deaminase (333 aa).

Histidine 12 and histidine 14 together coordinate Zn(2+). Substrate-binding residues include histidine 14, aspartate 16, and glycine 170. Histidine 197 serves as a coordination point for Zn(2+). The active-site Proton donor is glutamate 200. Aspartate 278 contacts Zn(2+). Aspartate 279 contacts substrate.

This sequence belongs to the metallo-dependent hydrolases superfamily. Adenosine and AMP deaminases family. Adenosine deaminase subfamily. Zn(2+) is required as a cofactor.

It catalyses the reaction adenosine + H2O + H(+) = inosine + NH4(+). The catalysed reaction is 2'-deoxyadenosine + H2O + H(+) = 2'-deoxyinosine + NH4(+). In terms of biological role, catalyzes the hydrolytic deamination of adenosine and 2-deoxyadenosine. This is Adenosine deaminase from Salmonella typhi.